We begin with the raw amino-acid sequence, 301 residues long: DSC E3 ubiquitin ligase complex subunit B (301 aa).

3 helical membrane passes run 9 to 29, 52 to 72, and 90 to 110; these read APIT…LSIL, LATW…AAML, and TFII…LVLL. The segment covering 268–284 has biased composition (low complexity); the sequence is AAAAASGNAGSASEASG. The interval 268-301 is disordered; the sequence is AAAAASGNAGSASEASGQRQRRREGGIMDRLRAL. A compositionally biased stretch (basic and acidic residues) spans 290–301; that stretch reads REGGIMDRLRAL.

As to quaternary structure, component of the DSC E3 ubiquitin ligase complex composed of dscA, dscB, dscC and dscD.

It localises to the endoplasmic reticulum membrane. The catalysed reaction is S-ubiquitinyl-[E2 ubiquitin-conjugating enzyme]-L-cysteine + [acceptor protein]-L-lysine = [E2 ubiquitin-conjugating enzyme]-L-cysteine + N(6)-ubiquitinyl-[acceptor protein]-L-lysine.. Its pathway is protein modification; protein ubiquitination. Component of the DSC E3 ubiquitin ligase complex which is required for the srbA transcriptional activator proteolytic cleavage to release the soluble transcription factor from the membrane in low oxygen or sterol conditions. Required for growth during hypoxia and triazole drug susceptibility, as well as for virulence in a murine model of invasive pulmonary aspergillosis (IPA). The sequence is that of DSC E3 ubiquitin ligase complex subunit B from Aspergillus fumigatus (strain ATCC MYA-4609 / CBS 101355 / FGSC A1100 / Af293) (Neosartorya fumigata).